The sequence spans 100 residues: MTPWFLYLIRTADNKLYTGITTDVERRYQQHQSGKGAKALRGKGELTLAFSAPVGDRSLALRAEYRVKQLTKRQKERLVAEGAGFAELLSSLQTPKIKSD.

Residues 2–77 enclose the GIY-YIG domain; the sequence is TPWFLYLIRT…KQLTKRQKER (76 aa).

This sequence belongs to the UPF0213 family.

This chain is UPF0213 protein YhbQ, found in Escherichia coli O7:K1 (strain IAI39 / ExPEC).